A 170-amino-acid chain; its full sequence is Peptide deformylase (170 aa).

C94 and H136 together coordinate Fe cation. Residue E137 is part of the active site. H140 contributes to the Fe cation binding site.

It belongs to the polypeptide deformylase family. It depends on Fe(2+) as a cofactor.

The catalysed reaction is N-terminal N-formyl-L-methionyl-[peptide] + H2O = N-terminal L-methionyl-[peptide] + formate. Its function is as follows. Removes the formyl group from the N-terminal Met of newly synthesized proteins. Requires at least a dipeptide for an efficient rate of reaction. N-terminal L-methionine is a prerequisite for activity but the enzyme has broad specificity at other positions. The chain is Peptide deformylase from Agrobacterium fabrum (strain C58 / ATCC 33970) (Agrobacterium tumefaciens (strain C58)).